Here is a 365-residue protein sequence, read N- to C-terminus: Dihydroorotate dehydrogenase (quinone) (365 aa).

FMN contacts are provided by residues 61–65 and Ser-85; that span reads AGFDK. A substrate-binding site is contributed by Lys-65. 110-114 provides a ligand contact to substrate; sequence NRMGF. FMN is bound by residues Asn-139 and Asn-170. Residue Asn-170 coordinates substrate. Ser-173 (nucleophile) is an active-site residue. Asn-175 provides a ligand contact to substrate. FMN contacts are provided by Lys-214 and Ser-242. Substrate is bound at residue 243-244; the sequence is NT. FMN-binding positions include Gly-266, Gly-295, and 316–317; that span reads YS.

The protein belongs to the dihydroorotate dehydrogenase family. Type 2 subfamily. Monomer. Requires FMN as cofactor.

It localises to the cell membrane. The catalysed reaction is (S)-dihydroorotate + a quinone = orotate + a quinol. The protein operates within pyrimidine metabolism; UMP biosynthesis via de novo pathway; orotate from (S)-dihydroorotate (quinone route): step 1/1. Functionally, catalyzes the conversion of dihydroorotate to orotate with quinone as electron acceptor. The sequence is that of Dihydroorotate dehydrogenase (quinone) from Bradyrhizobium diazoefficiens (strain JCM 10833 / BCRC 13528 / IAM 13628 / NBRC 14792 / USDA 110).